A 1030-amino-acid polypeptide reads, in one-letter code: Germ cell nuclear acidic protein (1030 aa).

Disordered regions lie at residues 1 to 59 (MADH…TEDT), 196 to 245 (EWNG…TQLA), 266 to 361 (KRLA…VSSI), 375 to 433 (TMES…EQFL), 457 to 594 (LKRS…DLTY), and 699 to 764 (KLGI…PVAS). Residues 20 to 33 (APKDHPEKRNDQKT) are compositionally biased toward basic and acidic residues. 2 stretches are compositionally biased toward polar residues: residues 298 to 316 (EPNTLCSDSSETHNSTIHN) and 329 to 349 (ETSSEGELTPQKASSGSSTSG). Residues 505-516 (LRTNQTPLNSTR) are compositionally biased toward polar residues. Composition is skewed to basic and acidic residues over residues 541–553 (NHIDEDRWRKLID) and 578–594 (DSDKDKENKQKRGDLTY). A compositionally biased stretch (low complexity) spans 720 to 748 (TPKTAPPKGTAPPKTSAPPKVSTPPKSTK).

This sequence belongs to the serine-aspartate repeat-containing protein (SDr) family.

The protein resides in the cytoplasm. The protein localises to the chromosome. Functionally, may play a role in DNA-protein cross-links (DPCs) clearance, ensuring the genomic stability by protecting germ cells and early embryos from various sources of damage. Limits replication stress and DNA double-strand breaks. The sequence is that of Germ cell nuclear acidic protein from Drosophila melanogaster (Fruit fly).